Consider the following 246-residue polypeptide: Large ribosomal subunit protein uL3 (246 aa).

Residue Gln-151 is modified to N5-methylglutamine.

The protein belongs to the universal ribosomal protein uL3 family. As to quaternary structure, part of the 50S ribosomal subunit. Forms a cluster with proteins L14 and L19. Post-translationally, methylated by PrmB.

Its function is as follows. One of the primary rRNA binding proteins, it binds directly near the 3'-end of the 23S rRNA, where it nucleates assembly of the 50S subunit. This is Large ribosomal subunit protein uL3 from Bartonella bacilliformis (strain ATCC 35685 / KC583 / Herrer 020/F12,63).